The primary structure comprises 572 residues: Mitochondrial distribution and morphology protein 34 (572 aa).

The region spanning 1 to 195 (MAFNFNWSPL…LPAIIHRLSL (195 aa)) is the SMP-LTD domain. 4 disordered regions span residues 208-236 (LQTQ…VDAL), 296-405 (PSDQ…CSAP), 455-518 (RDTA…PFIN), and 551-572 (NACG…AYGH). Over residues 296–347 (PSDQTDASGGVTSPFSPVLSRTQSQVGSMSSFPDSASMVSNQSRSSTPSHTF) the composition is skewed to polar residues. Residues 358–370 (RHSKAHARKRKKR) show a composition bias toward basic residues. Basic and acidic residues predominate over residues 371-381 (VVDLRRPKTTD). 2 stretches are compositionally biased toward polar residues: residues 387–401 (SDES…TPSI) and 498–511 (ATGS…QLPS).

It belongs to the MDM34 family. In terms of assembly, component of the ER-mitochondria encounter structure (ERMES) or MDM complex, composed of mmm1, mdm10, mdm12 and mdm34.

It localises to the mitochondrion outer membrane. Functionally, component of the ERMES/MDM complex, which serves as a molecular tether to connect the endoplasmic reticulum (ER) and mitochondria. Components of this complex are involved in the control of mitochondrial shape and protein biogenesis, and function in nonvesicular lipid trafficking between the ER and mitochondria. Mdm34 is required for the interaction of the ER-resident membrane protein mmm1 and the outer mitochondrial membrane-resident beta-barrel protein mdm10. The chain is Mitochondrial distribution and morphology protein 34 from Neosartorya fischeri (strain ATCC 1020 / DSM 3700 / CBS 544.65 / FGSC A1164 / JCM 1740 / NRRL 181 / WB 181) (Aspergillus fischerianus).